The chain runs to 224 residues: Cytidylate kinase (224 aa).

Residue 12-20 (GPAGAGKST) participates in ATP binding.

Belongs to the cytidylate kinase family. Type 1 subfamily.

Its subcellular location is the cytoplasm. It carries out the reaction CMP + ATP = CDP + ADP. The enzyme catalyses dCMP + ATP = dCDP + ADP. The sequence is that of Cytidylate kinase from Caldanaerobacter subterraneus subsp. tengcongensis (strain DSM 15242 / JCM 11007 / NBRC 100824 / MB4) (Thermoanaerobacter tengcongensis).